Consider the following 210-residue polypeptide: Thiamine-phosphate synthase (210 aa).

Residues 36 to 40 (QLREK) and asparagine 68 each bind 4-amino-2-methyl-5-(diphosphooxymethyl)pyrimidine. Residues aspartate 69 and aspartate 88 each contribute to the Mg(2+) site. Position 107 (serine 107) interacts with 4-amino-2-methyl-5-(diphosphooxymethyl)pyrimidine. 133–135 (TGS) lines the 2-[(2R,5Z)-2-carboxy-4-methylthiazol-5(2H)-ylidene]ethyl phosphate pocket. A 4-amino-2-methyl-5-(diphosphooxymethyl)pyrimidine-binding site is contributed by lysine 136. 2-[(2R,5Z)-2-carboxy-4-methylthiazol-5(2H)-ylidene]ethyl phosphate is bound by residues glycine 164 and 184-185 (IS).

It belongs to the thiamine-phosphate synthase family. It depends on Mg(2+) as a cofactor.

The catalysed reaction is 2-[(2R,5Z)-2-carboxy-4-methylthiazol-5(2H)-ylidene]ethyl phosphate + 4-amino-2-methyl-5-(diphosphooxymethyl)pyrimidine + 2 H(+) = thiamine phosphate + CO2 + diphosphate. It carries out the reaction 2-(2-carboxy-4-methylthiazol-5-yl)ethyl phosphate + 4-amino-2-methyl-5-(diphosphooxymethyl)pyrimidine + 2 H(+) = thiamine phosphate + CO2 + diphosphate. It catalyses the reaction 4-methyl-5-(2-phosphooxyethyl)-thiazole + 4-amino-2-methyl-5-(diphosphooxymethyl)pyrimidine + H(+) = thiamine phosphate + diphosphate. Its pathway is cofactor biosynthesis; thiamine diphosphate biosynthesis; thiamine phosphate from 4-amino-2-methyl-5-diphosphomethylpyrimidine and 4-methyl-5-(2-phosphoethyl)-thiazole: step 1/1. Its function is as follows. Condenses 4-methyl-5-(beta-hydroxyethyl)thiazole monophosphate (THZ-P) and 2-methyl-4-amino-5-hydroxymethyl pyrimidine pyrophosphate (HMP-PP) to form thiamine monophosphate (TMP). The protein is Thiamine-phosphate synthase of Moorella thermoacetica (strain ATCC 39073 / JCM 9320).